A 165-amino-acid chain; its full sequence is Probable deoxyuridine 5'-triphosphate nucleotidohydrolase (165 aa).

Basic and acidic residues predominate over residues 39 to 49 (GRIDTDGKTIG). The disordered stretch occupies residues 39-64 (GRIDTDGKTIGDRSPVTPTADEDSTD).

Belongs to the dCTP deaminase family. Archaeal dUTPase subfamily.

The enzyme catalyses dUTP + H2O = dUMP + diphosphate + H(+). The protein operates within pyrimidine metabolism; dUMP biosynthesis; dUMP from dCTP (dUTP route): step 2/2. This enzyme is involved in nucleotide metabolism: it produces dUMP, the immediate precursor of thymidine nucleotides and it decreases the intracellular concentration of dUTP so that uracil cannot be incorporated into DNA. This Halobacterium salinarum (strain ATCC 29341 / DSM 671 / R1) protein is Probable deoxyuridine 5'-triphosphate nucleotidohydrolase.